The primary structure comprises 261 residues: Cytochrome c oxidase subunit 3 (261 aa).

Residues 1-15 (MTHQTHAYHMVDPSP) lie on the Mitochondrial matrix side of the membrane. The helical transmembrane segment at 16–34 (WPLTGALSALLMTSGLTMW) threads the bilayer. Over 35–40 (FHYHSV) the chain is Mitochondrial intermembrane. Residues 41–66 (TLLLLGLTTNILTMFQWWRDVVREGT) form a helical membrane-spanning segment. Topologically, residues 67–72 (FQGHHT) are mitochondrial matrix. A helical transmembrane segment spans residues 73-105 (PVVQESLRYGMILFITSEVLFFTGFFWAFYHSS). At 106 to 128 (LAPTPELGSYWPPVGVYPLNPLE) the chain is on the mitochondrial intermembrane side. Residues 129 to 152 (VPLLNTSVLLASGVTITWAHHSLM) form a helical membrane-spanning segment. The Mitochondrial matrix portion of the chain corresponds to 153–155 (EGN). A helical transmembrane segment spans residues 156–183 (RKNMLQALLITILLGVYFTLLQMFEYYE). Residues 184–190 (ASFTISD) lie on the Mitochondrial intermembrane side of the membrane. Residues 191–223 (GIYGSTFFVTTGFHGLHVIIGSTFLLTCFIRQL) form a helical membrane-spanning segment. The Mitochondrial matrix segment spans residues 224–232 (KFHFTSNHH). The chain crosses the membrane as a helical span at residues 233–256 (FGFEAAAWYWHFVDVVWLFLYLSI). Over 257-261 (YWWGS) the chain is Mitochondrial intermembrane.

It belongs to the cytochrome c oxidase subunit 3 family. As to quaternary structure, component of the cytochrome c oxidase (complex IV, CIV), a multisubunit enzyme composed of 14 subunits. The complex is composed of a catalytic core of 3 subunits MT-CO1, MT-CO2 and MT-CO3, encoded in the mitochondrial DNA, and 11 supernumerary subunits COX4I, COX5A, COX5B, COX6A, COX6B, COX6C, COX7A, COX7B, COX7C, COX8 and NDUFA4, which are encoded in the nuclear genome. The complex exists as a monomer or a dimer and forms supercomplexes (SCs) in the inner mitochondrial membrane with NADH-ubiquinone oxidoreductase (complex I, CI) and ubiquinol-cytochrome c oxidoreductase (cytochrome b-c1 complex, complex III, CIII), resulting in different assemblies (supercomplex SCI(1)III(2)IV(1) and megacomplex MCI(2)III(2)IV(2)).

It is found in the mitochondrion inner membrane. The catalysed reaction is 4 Fe(II)-[cytochrome c] + O2 + 8 H(+)(in) = 4 Fe(III)-[cytochrome c] + 2 H2O + 4 H(+)(out). Component of the cytochrome c oxidase, the last enzyme in the mitochondrial electron transport chain which drives oxidative phosphorylation. The respiratory chain contains 3 multisubunit complexes succinate dehydrogenase (complex II, CII), ubiquinol-cytochrome c oxidoreductase (cytochrome b-c1 complex, complex III, CIII) and cytochrome c oxidase (complex IV, CIV), that cooperate to transfer electrons derived from NADH and succinate to molecular oxygen, creating an electrochemical gradient over the inner membrane that drives transmembrane transport and the ATP synthase. Cytochrome c oxidase is the component of the respiratory chain that catalyzes the reduction of oxygen to water. Electrons originating from reduced cytochrome c in the intermembrane space (IMS) are transferred via the dinuclear copper A center (CU(A)) of subunit 2 and heme A of subunit 1 to the active site in subunit 1, a binuclear center (BNC) formed by heme A3 and copper B (CU(B)). The BNC reduces molecular oxygen to 2 water molecules using 4 electrons from cytochrome c in the IMS and 4 protons from the mitochondrial matrix. This Loxodonta africana (African elephant) protein is Cytochrome c oxidase subunit 3 (MT-CO3).